The sequence spans 512 residues: Histidine ammonia-lyase (512 aa).

The 5-imidazolinone (Ala-Gly) cross-link spans 144–146 (ASG). Residue Ser145 is modified to 2,3-didehydroalanine (Ser).

It belongs to the PAL/histidase family. Contains an active site 4-methylidene-imidazol-5-one (MIO), which is formed autocatalytically by cyclization and dehydration of residues Ala-Ser-Gly.

It localises to the cytoplasm. It carries out the reaction L-histidine = trans-urocanate + NH4(+). Its pathway is amino-acid degradation; L-histidine degradation into L-glutamate; N-formimidoyl-L-glutamate from L-histidine: step 1/3. The polypeptide is Histidine ammonia-lyase (Desulfotalea psychrophila (strain LSv54 / DSM 12343)).